The chain runs to 106 residues: Protamine (106 aa).

A disordered region spans residues 1–106 (ARAVRRRRAR…TRRRRRRARR (106 aa)).

As to expression, sperm.

The protein resides in the nucleus. Its subcellular location is the chromosome. The sequence is that of Protamine from Phorcus turbinatus (Sea snail).